Reading from the N-terminus, the 473-residue chain is UDP-N-acetylmuramate--L-alanine ligase (473 aa).

122–128 (GTHGKTT) is an ATP binding site.

The protein belongs to the MurCDEF family.

The protein resides in the cytoplasm. It catalyses the reaction UDP-N-acetyl-alpha-D-muramate + L-alanine + ATP = UDP-N-acetyl-alpha-D-muramoyl-L-alanine + ADP + phosphate + H(+). Its pathway is cell wall biogenesis; peptidoglycan biosynthesis. Functionally, cell wall formation. The sequence is that of UDP-N-acetylmuramate--L-alanine ligase from Teredinibacter turnerae (strain ATCC 39867 / T7901).